A 57-amino-acid polypeptide reads, in one-letter code: Large ribosomal subunit protein bL32B (57 aa).

The protein belongs to the bacterial ribosomal protein bL32 family.

This Listeria welshimeri serovar 6b (strain ATCC 35897 / DSM 20650 / CCUG 15529 / CIP 8149 / NCTC 11857 / SLCC 5334 / V8) protein is Large ribosomal subunit protein bL32B.